We begin with the raw amino-acid sequence, 89 residues long: Small ribosomal subunit protein uS15 (89 aa).

It belongs to the universal ribosomal protein uS15 family. In terms of assembly, part of the 30S ribosomal subunit. Forms a bridge to the 50S subunit in the 70S ribosome, contacting the 23S rRNA.

Its function is as follows. One of the primary rRNA binding proteins, it binds directly to 16S rRNA where it helps nucleate assembly of the platform of the 30S subunit by binding and bridging several RNA helices of the 16S rRNA. Forms an intersubunit bridge (bridge B4) with the 23S rRNA of the 50S subunit in the ribosome. This chain is Small ribosomal subunit protein uS15, found in Acidothermus cellulolyticus (strain ATCC 43068 / DSM 8971 / 11B).